Here is a 427-residue protein sequence, read N- to C-terminus: Glutamate-1-semialdehyde 2,1-aminomutase (427 aa).

Position 267 is an N6-(pyridoxal phosphate)lysine (lysine 267).

This sequence belongs to the class-III pyridoxal-phosphate-dependent aminotransferase family. HemL subfamily. Homodimer. The cofactor is pyridoxal 5'-phosphate.

The protein localises to the cytoplasm. It carries out the reaction (S)-4-amino-5-oxopentanoate = 5-aminolevulinate. It functions in the pathway porphyrin-containing compound metabolism; protoporphyrin-IX biosynthesis; 5-aminolevulinate from L-glutamyl-tRNA(Glu): step 2/2. This chain is Glutamate-1-semialdehyde 2,1-aminomutase, found in Syntrophotalea carbinolica (strain DSM 2380 / NBRC 103641 / GraBd1) (Pelobacter carbinolicus).